The primary structure comprises 332 residues: Putative peptide import ATP-binding protein BruAb2_1033 (332 aa).

The 251-residue stretch at 11–261 (LEVSNLSVDF…PLHPYTEGLL (251 aa)) folds into the ABC transporter domain. 47–54 (GESGSGKS) is an ATP binding site.

This sequence belongs to the ABC transporter superfamily. The complex is composed of two ATP-binding proteins (BruAb2_1033 and BruAb2_1034), two transmembrane proteins (BruAb2_1031 and BruAb2_1032) and a solute-binding protein (BruAb2_1030).

Its subcellular location is the cell inner membrane. Probably part of an ABC transporter complex that could be involved in peptide import. Probably responsible for energy coupling to the transport system. The chain is Putative peptide import ATP-binding protein BruAb2_1033 from Brucella abortus biovar 1 (strain 9-941).